Reading from the N-terminus, the 293-residue chain is Protein Pat (293 aa).

Positions 187–287 constitute a BEN domain; that stretch reads LPDIILNPLD…LLLRTRQDRA (101 aa).

As to quaternary structure, interacts with poc1b. In terms of tissue distribution, an mRNA and protein component of germ plasm and primordial germ cells (PGCs) throughout oogenesis and early development, being first localized to the granulo-fibrillar material (GFM) of the mitochondrial cloud in stage I and II oocytes and to the periphery of mature germinal granules both in oocytes and in embryos. Shows some somatic expression including the ectodermal cells of tailbud embryos. In adults, only expressed in ovaries.

Its subcellular location is the cytoplasm. It localises to the nucleus. Functionally, probably plays a role in germ plasm formation, positioning and maintenance. The protein is Protein Pat of Xenopus laevis (African clawed frog).